We begin with the raw amino-acid sequence, 494 residues long: Aspartyl/glutamyl-tRNA(Asn/Gln) amidotransferase subunit B (494 aa).

The protein belongs to the GatB/GatE family. GatB subfamily. Heterotrimer of A, B and C subunits.

It carries out the reaction L-glutamyl-tRNA(Gln) + L-glutamine + ATP + H2O = L-glutaminyl-tRNA(Gln) + L-glutamate + ADP + phosphate + H(+). The catalysed reaction is L-aspartyl-tRNA(Asn) + L-glutamine + ATP + H2O = L-asparaginyl-tRNA(Asn) + L-glutamate + ADP + phosphate + 2 H(+). Allows the formation of correctly charged Asn-tRNA(Asn) or Gln-tRNA(Gln) through the transamidation of misacylated Asp-tRNA(Asn) or Glu-tRNA(Gln) in organisms which lack either or both of asparaginyl-tRNA or glutaminyl-tRNA synthetases. The reaction takes place in the presence of glutamine and ATP through an activated phospho-Asp-tRNA(Asn) or phospho-Glu-tRNA(Gln). This Rhodopseudomonas palustris (strain BisB18) protein is Aspartyl/glutamyl-tRNA(Asn/Gln) amidotransferase subunit B.